The following is a 485-amino-acid chain: NADH-quinone oxidoreductase subunit N (485 aa).

14 helical membrane-spanning segments follow: residues Leu8–Ile28, Phe35–Val55, Gly71–Ala91, Phe105–Leu125, Ser127–Phe147, Tyr159–Ala179, Leu203–Phe223, Pro235–Met255, Val271–Gln291, Leu297–Gln317, Val326–Leu346, Ala373–Ile393, Trp408–Val430, and Ile455–Ile475.

The protein belongs to the complex I subunit 2 family. In terms of assembly, NDH-1 is composed of 13 different subunits. Subunits NuoA, H, J, K, L, M, N constitute the membrane sector of the complex.

The protein resides in the cell inner membrane. It carries out the reaction a quinone + NADH + 5 H(+)(in) = a quinol + NAD(+) + 4 H(+)(out). NDH-1 shuttles electrons from NADH, via FMN and iron-sulfur (Fe-S) centers, to quinones in the respiratory chain. The immediate electron acceptor for the enzyme in this species is believed to be ubiquinone. Couples the redox reaction to proton translocation (for every two electrons transferred, four hydrogen ions are translocated across the cytoplasmic membrane), and thus conserves the redox energy in a proton gradient. This Shigella boydii serotype 18 (strain CDC 3083-94 / BS512) protein is NADH-quinone oxidoreductase subunit N.